Here is an 867-residue protein sequence, read N- to C-terminus: E3 ubiquitin-protein ligase SH3RF1 (867 aa).

An RING-type zinc finger spans residues Cys-12–Arg-53. The interval Ala-101 to Pro-127 is disordered. Residues Gly-116–Ser-125 show a composition bias toward polar residues. 2 consecutive SH3 domains span residues Pro-132–Pro-191 and Gln-194–Ala-257. The segment at Asp-265–Ile-328 is disordered. The span at Ser-275 to Pro-285 shows a compositional bias: low complexity. The region spanning Gln-436–Arg-497 is the SH3 3 domain. The disordered stretch occupies residues Leu-706–Pro-794. A compositionally biased stretch (low complexity) spans Ser-760 to Ser-769. Residues Asn-770–Thr-784 show a composition bias toward polar residues. The region spanning Ile-808–Ile-867 is the SH3 4 domain.

Belongs to the SH3RF family. In terms of processing, autoubiquitinated. Ubiquitinated by SH3RF2, leading to proteasome-mediated degradation.

Its subcellular location is the cytoplasm. It is found in the perinuclear region. It localises to the cell projection. The protein resides in the lamellipodium. The protein localises to the golgi apparatus. Its subcellular location is the trans-Golgi network. It catalyses the reaction S-ubiquitinyl-[E2 ubiquitin-conjugating enzyme]-L-cysteine + [acceptor protein]-L-lysine = [E2 ubiquitin-conjugating enzyme]-L-cysteine + N(6)-ubiquitinyl-[acceptor protein]-L-lysine.. It participates in protein modification; protein ubiquitination. Functionally, has E3 ubiquitin-protein ligase activity. In the absence of an external substrate, it can catalyze self-ubiquitination. Acts as a scaffold protein that contributes to the effective activation of the JNK signaling pathway. The protein is E3 ubiquitin-protein ligase SH3RF1 (sh3rf1) of Danio rerio (Zebrafish).